The primary structure comprises 342 residues: N-acetyl-gamma-glutamyl-phosphate reductase (342 aa).

Cysteine 149 is a catalytic residue.

The protein belongs to the NAGSA dehydrogenase family. Type 1 subfamily.

The protein resides in the cytoplasm. The enzyme catalyses N-acetyl-L-glutamate 5-semialdehyde + phosphate + NADP(+) = N-acetyl-L-glutamyl 5-phosphate + NADPH + H(+). It functions in the pathway amino-acid biosynthesis; L-arginine biosynthesis; N(2)-acetyl-L-ornithine from L-glutamate: step 3/4. Its function is as follows. Catalyzes the NADPH-dependent reduction of N-acetyl-5-glutamyl phosphate to yield N-acetyl-L-glutamate 5-semialdehyde. The chain is N-acetyl-gamma-glutamyl-phosphate reductase from Cereibacter sphaeroides (strain KD131 / KCTC 12085) (Rhodobacter sphaeroides).